We begin with the raw amino-acid sequence, 297 residues long: D-alanine--D-alanine ligase (297 aa).

Positions K95–E294 constitute an ATP-grasp domain. Residue V125–T180 coordinates ATP. D248, E261, and N263 together coordinate Mg(2+).

The protein belongs to the D-alanine--D-alanine ligase family. The cofactor is Mg(2+). It depends on Mn(2+) as a cofactor.

It is found in the cytoplasm. The enzyme catalyses 2 D-alanine + ATP = D-alanyl-D-alanine + ADP + phosphate + H(+). It functions in the pathway cell wall biogenesis; peptidoglycan biosynthesis. In terms of biological role, cell wall formation. In Haemophilus influenzae (strain PittEE), this protein is D-alanine--D-alanine ligase.